A 65-amino-acid chain; its full sequence is Large ribosomal subunit protein bL35 (65 aa).

This sequence belongs to the bacterial ribosomal protein bL35 family.

This Photorhabdus laumondii subsp. laumondii (strain DSM 15139 / CIP 105565 / TT01) (Photorhabdus luminescens subsp. laumondii) protein is Large ribosomal subunit protein bL35.